The chain runs to 122 residues: Large ribosomal subunit protein uL14 (122 aa).

It belongs to the universal ribosomal protein uL14 family. Part of the 50S ribosomal subunit. Forms a cluster with proteins L3 and L19. In the 70S ribosome, L14 and L19 interact and together make contacts with the 16S rRNA in bridges B5 and B8.

Its function is as follows. Binds to 23S rRNA. Forms part of two intersubunit bridges in the 70S ribosome. The polypeptide is Large ribosomal subunit protein uL14 (Pseudomonas savastanoi pv. phaseolicola (strain 1448A / Race 6) (Pseudomonas syringae pv. phaseolicola (strain 1448A / Race 6))).